The chain runs to 422 residues: UDP-N-acetylmuramoylalanine--D-glutamate ligase (422 aa).

102–108 (GTNGKTT) contacts ATP.

It belongs to the MurCDEF family.

The protein resides in the cytoplasm. The enzyme catalyses UDP-N-acetyl-alpha-D-muramoyl-L-alanine + D-glutamate + ATP = UDP-N-acetyl-alpha-D-muramoyl-L-alanyl-D-glutamate + ADP + phosphate + H(+). Its pathway is cell wall biogenesis; peptidoglycan biosynthesis. Cell wall formation. Catalyzes the addition of glutamate to the nucleotide precursor UDP-N-acetylmuramoyl-L-alanine (UMA). This is UDP-N-acetylmuramoylalanine--D-glutamate ligase from Helicobacter pylori (strain HPAG1).